The sequence spans 621 residues: Chaperone protein HscA homolog (621 aa).

Belongs to the heat shock protein 70 family.

Chaperone involved in the maturation of iron-sulfur cluster-containing proteins. Has a low intrinsic ATPase activity which is markedly stimulated by HscB. The sequence is that of Chaperone protein HscA homolog from Ralstonia nicotianae (strain ATCC BAA-1114 / GMI1000) (Ralstonia solanacearum).